An 842-amino-acid polypeptide reads, in one-letter code: Protein P (842 aa).

A terminal protein domain (TP) region spans residues 1-177; sequence MPLSYQHFRR…FCGSPYSWEQ (177 aa). The interval 178–345 is spacer; that stretch reads ELHHGAFLDG…YCLTHLVNLL (168 aa). The tract at residues 186 to 273 is disordered; the sequence is DGPSRMGEES…AKNIASRSAS (88 aa). Over residues 223-239 the composition is skewed to polar residues; the sequence is GPQSQQRPLDGSQQGRS. A polymerase/reverse transcriptase domain (RT) region spans residues 346 to 689; it reads EDWGPCTEHG…YLNLYPVARQ (344 aa). The region spanning 356 to 599 is the Reverse transcriptase domain; it reads KHHIRIPRTP…YSLNFMGYVI (244 aa). Aspartate 428, aspartate 550, and aspartate 551 together coordinate Mg(2+).

Belongs to the hepadnaviridae P protein family.

It carries out the reaction DNA(n) + a 2'-deoxyribonucleoside 5'-triphosphate = DNA(n+1) + diphosphate. It catalyses the reaction Endonucleolytic cleavage to 5'-phosphomonoester.. With respect to regulation, activated by host HSP70 and HSP40 in vitro to be able to bind the epsilon loop of the pgRNA. Because deletion of the RNase H region renders the protein partly chaperone-independent, the chaperones may be needed indirectly to relieve occlusion of the RNA-binding site by this domain. Inhibited by several reverse-transcriptase inhibitors: Lamivudine, Adefovir and Entecavir. In terms of biological role, multifunctional enzyme that converts the viral RNA genome into dsDNA in viral cytoplasmic capsids. This enzyme displays a DNA polymerase activity that can copy either DNA or RNA templates, and a ribonuclease H (RNase H) activity that cleaves the RNA strand of RNA-DNA heteroduplexes in a partially processive 3'- to 5'-endonucleasic mode. Neo-synthesized pregenomic RNA (pgRNA) are encapsidated together with the P protein, and reverse-transcribed inside the nucleocapsid. Initiation of reverse-transcription occurs first by binding the epsilon loop on the pgRNA genome, and is initiated by protein priming, thereby the 5'-end of (-)DNA is covalently linked to P protein. Partial (+)DNA is synthesized from the (-)DNA template and generates the relaxed circular DNA (RC-DNA) genome. After budding and infection, the RC-DNA migrates in the nucleus, and is converted into a plasmid-like covalently closed circular DNA (cccDNA). The activity of P protein does not seem to be necessary for cccDNA generation, and is presumably released from (+)DNA by host nuclear DNA repair machinery. This is Protein P from Homo sapiens (Human).